Reading from the N-terminus, the 705-residue chain is Polyribonucleotide nucleotidyltransferase (705 aa).

Residues Asp494 and Asp500 each coordinate Mg(2+). Residues 561 to 620 (PRITTVKVKPEKVRAVIGTGGKNIRQIVSETGVTIDVEDDGTVTIASSDMEASARAIAMV) form the KH domain. Residues 630–698 (GKIYRGTVKK…KQGKIRLSRK (69 aa)) enclose the S1 motif domain.

This sequence belongs to the polyribonucleotide nucleotidyltransferase family. The cofactor is Mg(2+).

It localises to the cytoplasm. The enzyme catalyses RNA(n+1) + phosphate = RNA(n) + a ribonucleoside 5'-diphosphate. In terms of biological role, involved in mRNA degradation. Catalyzes the phosphorolysis of single-stranded polyribonucleotides processively in the 3'- to 5'-direction. The protein is Polyribonucleotide nucleotidyltransferase of Syntrophus aciditrophicus (strain SB).